Consider the following 146-residue polypeptide: uncharacterized protein (146 aa).

Belongs to the BlaI transcriptional regulatory family.

This is an uncharacterized protein from Latilactobacillus sakei (Lactobacillus sakei).